Here is a 137-residue protein sequence, read N- to C-terminus: Probable 4-amino-4-deoxy-L-arabinose-phosphoundecaprenol flippase subunit ArnF (137 aa).

Residues 1 to 5 lie on the Cytoplasmic side of the membrane; sequence MSRAR. A helical membrane pass occupies residues 6–26; the sequence is GFAFALGSVALVSGAQLGMRW. Over 27–49 the chain is Periplasmic; that stretch reads SMTRLPAPDQWLPALSAGSVDLA. A helical transmembrane segment spans residues 50-70; the sequence is ALAVVAAAIAAYALSMLCWLL. The Cytoplasmic portion of the chain corresponds to 71–80; the sequence is ALRDLPLGRA. A helical membrane pass occupies residues 81 to 101; the sequence is YSLLSISYALVYLLAASLPLF. Residue Asn-102 is a topological domain, periplasmic. Residues 103–123 form a helical membrane-spanning segment; the sequence is EPFTLSKTLGVALVILGVITI. The Cytoplasmic portion of the chain corresponds to 124-137; it reads NSRSAPATSPRNTP.

Belongs to the ArnF family. Heterodimer of ArnE and ArnF.

The protein localises to the cell inner membrane. Its pathway is bacterial outer membrane biogenesis; lipopolysaccharide biosynthesis. Its function is as follows. Translocates 4-amino-4-deoxy-L-arabinose-phosphoundecaprenol (alpha-L-Ara4N-phosphoundecaprenol) from the cytoplasmic to the periplasmic side of the inner membrane. The chain is Probable 4-amino-4-deoxy-L-arabinose-phosphoundecaprenol flippase subunit ArnF from Pseudomonas fluorescens (strain ATCC BAA-477 / NRRL B-23932 / Pf-5).